The following is a 505-amino-acid chain: Histidine ammonia-lyase (505 aa).

A cross-link (5-imidazolinone (Ala-Gly)) is located at residues 141-143 (ASG). Serine 142 bears the 2,3-didehydroalanine (Ser) mark.

It belongs to the PAL/histidase family. In terms of processing, contains an active site 4-methylidene-imidazol-5-one (MIO), which is formed autocatalytically by cyclization and dehydration of residues Ala-Ser-Gly.

The protein resides in the cytoplasm. The enzyme catalyses L-histidine = trans-urocanate + NH4(+). The protein operates within amino-acid degradation; L-histidine degradation into L-glutamate; N-formimidoyl-L-glutamate from L-histidine: step 1/3. This chain is Histidine ammonia-lyase, found in Bacillus mycoides (strain KBAB4) (Bacillus weihenstephanensis).